The following is a 230-amino-acid chain: MTKLYKVLIIEDDFRVAQIQEQMVNDHPYFHVISTCRTGGEALDYLSEKAAALDLILLDVYIPDVKGLELLWAIREKFRDVDIMMVTAAKEVDTVQEALRGGIIDYLLKPVQKEVLHQRLDAYVQKRELFGERRQVSQEELDQLRQVQVRVQVGETPLPKGIDRLTLEKVVNALEEAETQGLTAMEGARLIGASRSTVRRYFEYLIHTKKAKAEVNYGDVGRPERRYFLC.

One can recognise a Response regulatory domain in the interval 6-124 (KVLIIEDDFR…VLHQRLDAYV (119 aa)). Asp-59 is modified (4-aspartylphosphate). The H-T-H motif DNA-binding region spans 184-203 (AMEGARLIGASRSTVRRYFE).

Phosphorylated by CitS.

It is found in the cytoplasm. In terms of biological role, member of the two-component regulatory system CitT/CitS. This chain is Transcriptional regulatory protein CitT (citT), found in Halalkalibacterium halodurans (strain ATCC BAA-125 / DSM 18197 / FERM 7344 / JCM 9153 / C-125) (Bacillus halodurans).